The following is a 353-amino-acid chain: Uroporphyrinogen decarboxylase (353 aa).

Substrate is bound by residues 30–34 (RQAGR), aspartate 79, tyrosine 154, serine 209, and histidine 332.

The protein belongs to the uroporphyrinogen decarboxylase family. Homodimer.

The protein localises to the cytoplasm. The catalysed reaction is uroporphyrinogen III + 4 H(+) = coproporphyrinogen III + 4 CO2. It participates in porphyrin-containing compound metabolism; protoporphyrin-IX biosynthesis; coproporphyrinogen-III from 5-aminolevulinate: step 4/4. In terms of biological role, catalyzes the decarboxylation of four acetate groups of uroporphyrinogen-III to yield coproporphyrinogen-III. The protein is Uroporphyrinogen decarboxylase of Mycobacterium ulcerans (strain Agy99).